We begin with the raw amino-acid sequence, 736 residues long: Polyribonucleotide nucleotidyltransferase (736 aa).

Asp-506 and Asp-512 together coordinate Mg(2+). In terms of domain architecture, KH spans 573–632; the sequence is PRLTTIQVPVDAIGLIIGKGGETIRSITEETGAEINIEDDGTVTIACSSVEGTHAALATI. Residues 642-717 enclose the S1 motif domain; it reads GTIYLGKVRD…GKTRFALSMR (76 aa).

This sequence belongs to the polyribonucleotide nucleotidyltransferase family. Requires Mg(2+) as cofactor.

It localises to the cytoplasm. It catalyses the reaction RNA(n+1) + phosphate = RNA(n) + a ribonucleoside 5'-diphosphate. Functionally, involved in mRNA degradation. Catalyzes the phosphorolysis of single-stranded polyribonucleotides processively in the 3'- to 5'-direction. In Chlorobium limicola (strain DSM 245 / NBRC 103803 / 6330), this protein is Polyribonucleotide nucleotidyltransferase.